The sequence spans 652 residues: MESISQYAWLIPIFPLAGSLLIGIGLISFRRATNILRWRYSFLIIALLGISLILSCLILFSQINATPSYQWIFQWIVTNNFLLEIGYFVDPLTAVMLVIVTTVAILVLIYTDGYMSYDEGYVRFFAYLSLFTTSMLGLVLSPNLLQIYVFWELVGMCSYLLIGFWFTRPAAADACQKAFVTNRVGDFGLLLGILGFYWMTGSFEFDVISMKLLQLAEYDNFNTQLAIFFGFLIFLGPVAKSAQFPLHVWLPDAMEGPTPISALIHAATMVAAGVFLVARMFPIFSQFPFLMDLIAWTGAITAIIGATIAVTQVDLKKGLAYSTMSQLGYMIMAMGMGSYTASLFHLMTHAYSKALLFLSAGSTIHGMEPIVGFNPAKNQNMSLMGGIRKYMPITGNAFLIGTLSLCGIPPLACFWSKDAILSNAFVHSPLLWFIGWSTAGLTSFYMFRMYFLVFEGEFRGNSVNQEKIRSNKLPKESNTKMTLPLIILTLFSITIGWIGTPFNNQFMFLIHTINQEIEPFDINEFLFIAGSSVGIALLGCYTAYLIYIKDKNTDKFANLLQPFYQLSFNKWYIDDIYEYIFVKGNRQLAQQTLLFDKKIIDGFVNLTGLITLVSSESLRSIENGKIQSYILMIIFTLLTILGISQTYYSLIL.

16 helical membrane-spanning segments follow: residues 9–29, 40–60, 91–111, 124–144, 147–167, 188–208, 225–245, 258–278, 289–309, 327–347, 354–374, 395–415, 424–444, 482–502, 526–546, and 630–650; these read WLIPIFPLAGSLLIGIGLISF, YSFLIIALLGISLILSCLILF, PLTAVMLVIVTTVAILVLIYT, FFAYLSLFTTSMLGLVLSPNL, IYVFWELVGMCSYLLIGFWFT, GLLLGILGFYWMTGSFEFDVI, LAIFFGFLIFLGPVAKSAQFP, TPISALIHAATMVAAGVFLVA, FLMDLIAWTGAITAIIGATIA, LGYMIMAMGMGSYTASLFHLM, ALLFLSAGSTIHGMEPIVGFN, GNAFLIGTLSLCGIPPLACFW, AFVHSPLLWFIGWSTAGLTSF, TLPLIILTLFSITIGWIGTPF, LFIAGSSVGIALLGCYTAYLI, and ILMIIFTLLTILGISQTYYSL.

This sequence belongs to the complex I subunit 5 family. NDH is composed of at least 16 different subunits, 5 of which are encoded in the nucleus.

It localises to the plastid. Its subcellular location is the chloroplast thylakoid membrane. It catalyses the reaction a plastoquinone + NADH + (n+1) H(+)(in) = a plastoquinol + NAD(+) + n H(+)(out). It carries out the reaction a plastoquinone + NADPH + (n+1) H(+)(in) = a plastoquinol + NADP(+) + n H(+)(out). In terms of biological role, NDH shuttles electrons from NAD(P)H:plastoquinone, via FMN and iron-sulfur (Fe-S) centers, to quinones in the photosynthetic chain and possibly in a chloroplast respiratory chain. The immediate electron acceptor for the enzyme in this species is believed to be plastoquinone. Couples the redox reaction to proton translocation, and thus conserves the redox energy in a proton gradient. This chain is NAD(P)H-quinone oxidoreductase subunit 5, chloroplastic (ndhF), found in Mesostigma viride (Green alga).